The sequence spans 24 residues: Pseudin-2 (24 aa).

Expressed by the skin glands.

It is found in the secreted. Antimicrobial peptide with activity against fungus (C.albicans) and Gram-positive and Gram-negative bacteria (S.aureus and E.coli). Also has low hemolytic activity against human erythrocytes. The polypeptide is Pseudin-2 (Pseudis paradoxa (Paradoxical frog)).